The primary structure comprises 473 residues: MKNMIYNLISISLYSLIIILTDIYAKTSSLICNKNDIYLNDKFYFLKKKKYILYDVNIGEGFNLQKEVLYRMSLVIYQLNKRDKEYIYYLVLPPWCYLSHWSNKRHDNLQWNIFLNMNIIKNVIPIIEFSDYKKLYGDVTDFIISFKYLLDSNAQKAKYYHVLPFDKCYIEDYKFKIVCKNCDYKYSVTYSGNCTNIKGKNTLCYSDYIVTNYLVNYVVHKLFYIHNINSILIKNSNVVLVPFPNELFENNIEDILLFNEKLIYNGNNYIKEILKNSNYISCHLRYNDFKKITSYDVPSVQIAILKLLYIMFMNNKEKIFISTDEKKYVQYIINKHFKQFKHFFYFYENKDNYHEGQVAIIEQWICANSSTFVGNIFSRFTMHIIWERYLITKGKEHQNIDLCGYSINNNEQLKNRYKKIQYIYDHSSIEKLNNIYNTYSEIDKKYIITLCFGFPSHFPSNLSIYRKKYIPFA.

A signal peptide spans 1–25 (MKNMIYNLISISLYSLIIILTDIYA). Residues 59–63 (GEGFN), 283–285 (HLR), and 379–380 (RF) contribute to the GDP-beta-L-fucose site. Glutamate 60 acts as the Proton acceptor in catalysis.

It belongs to the glycosyltransferase 68 family.

The protein resides in the endoplasmic reticulum. The catalysed reaction is L-seryl-[protein] + GDP-beta-L-fucose = 3-O-(alpha-L-fucosyl)-L-seryl-[protein] + GDP + H(+). The enzyme catalyses L-threonyl-[protein] + GDP-beta-L-fucose = 3-O-(alpha-L-fucosyl)-L-threonyl-[protein] + GDP + H(+). Its pathway is protein modification; protein glycosylation. Functionally, catalyzes the reaction that attaches fucose through an O-glycosidic linkage to a conserved serine or threonine residue in the consensus sequence C1-X-X-S/T-C2 of thrombospondin type I repeats (TSRs) where C1 and C2 are the first and second cysteines of the repeat, respectively. O-fucosylates sporozoite proteins CSP and TRAP. O-fucosylation regulates stability and intracellular trafficking of TRAP but not of CSP. Dispensable for parasite transmission to the mosquito vector and/or infection of the vertebrate host hepatocytes. This Plasmodium berghei (strain Anka) protein is GDP-fucose protein O-fucosyltransferase 2.